Reading from the N-terminus, the 225-residue chain is Phosphoglycolate phosphatase (225 aa).

Asp-11 acts as the Nucleophile in catalysis. Mg(2+) is bound by residues Asp-11, Asp-13, and Asp-174.

The protein belongs to the HAD-like hydrolase superfamily. CbbY/CbbZ/Gph/YieH family. It depends on Mg(2+) as a cofactor.

The enzyme catalyses 2-phosphoglycolate + H2O = glycolate + phosphate. It functions in the pathway organic acid metabolism; glycolate biosynthesis; glycolate from 2-phosphoglycolate: step 1/1. Specifically catalyzes the dephosphorylation of 2-phosphoglycolate. Is involved in the dissimilation of the intracellular 2-phosphoglycolate formed during the DNA repair of 3'-phosphoglycolate ends, a major class of DNA lesions induced by oxidative stress. This chain is Phosphoglycolate phosphatase, found in Nitrosococcus oceani (strain ATCC 19707 / BCRC 17464 / JCM 30415 / NCIMB 11848 / C-107).